The following is a 140-amino-acid chain: UPF0251 protein Athe_2281 (140 aa).

This sequence belongs to the UPF0251 family.

The sequence is that of UPF0251 protein Athe_2281 from Caldicellulosiruptor bescii (strain ATCC BAA-1888 / DSM 6725 / KCTC 15123 / Z-1320) (Anaerocellum thermophilum).